A 343-amino-acid polypeptide reads, in one-letter code: 4-hydroxy-3-methylbut-2-enyl diphosphate reductase (343 aa).

A [4Fe-4S] cluster-binding site is contributed by C18. (2E)-4-hydroxy-3-methylbut-2-enyl diphosphate contacts are provided by H47 and H83. The dimethylallyl diphosphate site is built by H47 and H83. Residues H47 and H83 each coordinate isopentenyl diphosphate. C105 contributes to the [4Fe-4S] cluster binding site. H133 contacts (2E)-4-hydroxy-3-methylbut-2-enyl diphosphate. H133 serves as a coordination point for dimethylallyl diphosphate. H133 provides a ligand contact to isopentenyl diphosphate. E135 acts as the Proton donor in catalysis. Residue T174 coordinates (2E)-4-hydroxy-3-methylbut-2-enyl diphosphate. C204 is a binding site for [4Fe-4S] cluster. 4 residues coordinate (2E)-4-hydroxy-3-methylbut-2-enyl diphosphate: S232, S233, N234, and S277. 4 residues coordinate dimethylallyl diphosphate: S232, S233, N234, and S277. Isopentenyl diphosphate contacts are provided by S232, S233, N234, and S277.

This sequence belongs to the IspH family. [4Fe-4S] cluster serves as cofactor.

It carries out the reaction isopentenyl diphosphate + 2 oxidized [2Fe-2S]-[ferredoxin] + H2O = (2E)-4-hydroxy-3-methylbut-2-enyl diphosphate + 2 reduced [2Fe-2S]-[ferredoxin] + 2 H(+). It catalyses the reaction dimethylallyl diphosphate + 2 oxidized [2Fe-2S]-[ferredoxin] + H2O = (2E)-4-hydroxy-3-methylbut-2-enyl diphosphate + 2 reduced [2Fe-2S]-[ferredoxin] + 2 H(+). It participates in isoprenoid biosynthesis; dimethylallyl diphosphate biosynthesis; dimethylallyl diphosphate from (2E)-4-hydroxy-3-methylbutenyl diphosphate: step 1/1. The protein operates within isoprenoid biosynthesis; isopentenyl diphosphate biosynthesis via DXP pathway; isopentenyl diphosphate from 1-deoxy-D-xylulose 5-phosphate: step 6/6. Its function is as follows. Catalyzes the conversion of 1-hydroxy-2-methyl-2-(E)-butenyl 4-diphosphate (HMBPP) into a mixture of isopentenyl diphosphate (IPP) and dimethylallyl diphosphate (DMAPP). Acts in the terminal step of the DOXP/MEP pathway for isoprenoid precursor biosynthesis. In Bartonella henselae (strain ATCC 49882 / DSM 28221 / CCUG 30454 / Houston 1) (Rochalimaea henselae), this protein is 4-hydroxy-3-methylbut-2-enyl diphosphate reductase.